A 182-amino-acid chain; its full sequence is MMELQELYKKTITPALQKEFGFKSVMAVPRLEKITLNMGLGEAVADKKVIERAMDDMIKISGQKPLITYARKSEAGFKIRAGWPIGCKVTLRRDRMYEFLKRLISIAIPRIRDFRGLSPKSFDGRGNYSLGIREQIVFPEIQYDKVDAIRGMDITITTTARTDEEGRALLKAFGFPLKDESR.

The protein belongs to the universal ribosomal protein uL5 family. In terms of assembly, part of the 50S ribosomal subunit; part of the 5S rRNA/L5/L18/L25 subcomplex. Contacts the 5S rRNA and the P site tRNA. Forms a bridge to the 30S subunit in the 70S ribosome.

Its function is as follows. This is one of the proteins that bind and probably mediate the attachment of the 5S RNA into the large ribosomal subunit, where it forms part of the central protuberance. In the 70S ribosome it contacts protein S13 of the 30S subunit (bridge B1b), connecting the 2 subunits; this bridge is implicated in subunit movement. Contacts the P site tRNA; the 5S rRNA and some of its associated proteins might help stabilize positioning of ribosome-bound tRNAs. This Coxiella burnetii (strain CbuK_Q154) (Coxiella burnetii (strain Q154)) protein is Large ribosomal subunit protein uL5.